Reading from the N-terminus, the 194-residue chain is GTP cyclohydrolase 1 (194 aa).

Zn(2+) is bound by residues Cys-83, His-86, and Cys-155.

It belongs to the GTP cyclohydrolase I family. In terms of assembly, toroid-shaped homodecamer, composed of two pentamers of five dimers.

It catalyses the reaction GTP + H2O = 7,8-dihydroneopterin 3'-triphosphate + formate + H(+). It participates in cofactor biosynthesis; 7,8-dihydroneopterin triphosphate biosynthesis; 7,8-dihydroneopterin triphosphate from GTP: step 1/1. The chain is GTP cyclohydrolase 1 (folE) from Streptococcus pyogenes serotype M1.